Reading from the N-terminus, the 73-residue chain is MLHLIKMVSKIVLLITLVFIVSAVTGSDTWVGECDYACENGKNAIDACCSQKGYAPRGYCPNGMHARCQYSVI.

The signal sequence occupies residues Met-1 to Ala-23.

This is an uncharacterized protein from Acheta domesticus (House cricket).